The sequence spans 321 residues: tRNA-dihydrouridine synthase B (321 aa).

Residues 16-18 (PMA) and glutamine 70 each bind FMN. Cysteine 100 acts as the Proton donor in catalysis. FMN contacts are provided by residues lysine 139, 200 to 202 (NGD), and 224 to 225 (GR).

This sequence belongs to the Dus family. DusB subfamily. Requires FMN as cofactor.

The catalysed reaction is a 5,6-dihydrouridine in tRNA + NAD(+) = a uridine in tRNA + NADH + H(+). The enzyme catalyses a 5,6-dihydrouridine in tRNA + NADP(+) = a uridine in tRNA + NADPH + H(+). Catalyzes the synthesis of 5,6-dihydrouridine (D), a modified base found in the D-loop of most tRNAs, via the reduction of the C5-C6 double bond in target uridines. This is tRNA-dihydrouridine synthase B from Shigella flexneri.